The chain runs to 220 residues: Thiopurine S-methyltransferase (220 aa).

The S-adenosyl-L-methionine site is built by Trp-10, Leu-45, Glu-66, and Arg-123.

This sequence belongs to the class I-like SAM-binding methyltransferase superfamily. TPMT family.

It is found in the cytoplasm. The enzyme catalyses S-adenosyl-L-methionine + a thiopurine = S-adenosyl-L-homocysteine + a thiopurine S-methylether.. The sequence is that of Thiopurine S-methyltransferase from Pseudomonas syringae pv. syringae (strain B728a).